Consider the following 409-residue polypeptide: MIDTLFFLFFLFFDSPLRRLLLLCAVLALRAPTAHSPILRSSIVTPTARAVSEVSGCTTIDPDFLVEISDSNQTRAMSKARVYTEVNVIRPKDYWDYESLIVQWGEQDDYEVVRKVGRGKYSEVFEGINVNSKEKCIIKILKPVKKKKIRREIKILQNLCGGPNIVKLLDVVRDQHSKTPSLIFEYVNSTDFKVLYPTLTDYDIRYYIYELLKALDFCHSQGIMHRDVKPHNVMIDHELRKLRLIDWGLAEFYHPGKEYNVRVASRYFKGPELLVDLQDYDYSLDMWSLGCMFAGMIFRKEPFFYGHDNQDQLVKIAKVLGTDELNAYLNKYQLELDPQLEALVGRHSRKPWSKFINADNQHLVSPEAIDFLDKLLRYDHQDRLTAKEAMAHAYFAQVRAAETSRMRSQ.

The first 35 residues, 1–35 (MIDTLFFLFFLFFDSPLRRLLLLCAVLALRAPTAH), serve as a signal peptide directing secretion. N72 carries an N-linked (GlcNAc...) asparagine glycan. A Protein kinase domain is found at 110–395 (YEVVRKVGRG…AKEAMAHAYF (286 aa)). ATP is bound by residues 116–124 (VGRGKYSEV) and K139. The N-linked (GlcNAc...) asparagine glycan is linked to N188. D227 acts as the Proton acceptor in catalysis.

This sequence belongs to the protein kinase superfamily. Ser/Thr protein kinase family. CK2 subfamily. In terms of assembly, heterotetramer of two catalytic alpha subunits and two regulatory beta subunits. In terms of tissue distribution, seems to be present in all plant organs. But seems to be less expressed than CKA2.

It is found in the nucleus. Its subcellular location is the nucleolus. The enzyme catalyses L-seryl-[protein] + ATP = O-phospho-L-seryl-[protein] + ADP + H(+). It catalyses the reaction L-threonyl-[protein] + ATP = O-phospho-L-threonyl-[protein] + ADP + H(+). Its activity is regulated as follows. Inhibited by heparin. In terms of biological role, casein kinases are operationally defined by their preferential utilization of acidic proteins such as caseins as substrates. Phosphorylates casein in vitro. The alpha chain contains the catalytic site. The tetrameric holoenzyme CK2, composed of two alpha and two beta subunits, phosphorylates the transcription factor GBFl, resulting in stimulation of its DNA binding activity. CK2 phosphorylates the transcription factor PIF1 after an exposure to light, resulting in a proteasome-dependent degradation of PIF1 and promotion of photomorphogenesis. CK2 phosphorylates translation initiation factors. May participate in the regulation of the initiation of translation. Acts as a circadian clock component that maintains the correct period length through phosphorylation of CCA1. Required for the maintenance and control of genomic stability and chromatin structure. May act as an ectokinase that phosphorylates several extracellular proteins. In Arabidopsis thaliana (Mouse-ear cress), this protein is Casein kinase II subunit alpha-1.